A 310-amino-acid chain; its full sequence is MGNQIKSVMLLTAMTAFLLIVGQLIGGRAGMTFALIMAVGMNFFSYWYSDKIVLKMYRAKEVNPGQALELYGIVQRLSSNAGLPMPKVYIIPQQAPNAFATGRNPDHAVVAVTEGLLNLMNREELAGVLAHELAHVKNRDILIGTIAATMAGAVMFLASMAKWGAIFGGFGGNDDDSPLGFAGMLIMAILAPIGAALIQMTISRTREYQADATGAQIAGNPKGLANALAKLGAYSGRIPMDAEPATAHMFIVNPLSGKSLATLFSTHPPLEERIARLTGARPQSGGAPSGPERTARNAEDSAKDFWDSLK.

The next 2 helical transmembrane spans lie at 7–27 (SVML…LIGG) and 29–49 (AGMT…YWYS). Residue H131 participates in Zn(2+) binding. The active site involves E132. H135 is a Zn(2+) binding site. 2 helical membrane passes run 141–161 (ILIG…ASMA) and 178–198 (PLGF…AALI). E207 is a Zn(2+) binding site. Residues 277 to 310 (LTGARPQSGGAPSGPERTARNAEDSAKDFWDSLK) form a disordered region. Residues 293–310 (RTARNAEDSAKDFWDSLK) are compositionally biased toward basic and acidic residues.

It belongs to the peptidase M48B family. The cofactor is Zn(2+).

The protein resides in the cell inner membrane. In Desulfatibacillum aliphaticivorans, this protein is Protease HtpX homolog.